The following is a 667-amino-acid chain: Protein adenylyltransferase SelO, mitochondrial (667 aa).

A mitochondrion-targeting transit peptide spans 1 to 6 (MASVRA). ATP-binding residues include Gly154, Gly156, Lys177, Asp189, Gly190, Arg247, and Arg254. Asp341 functions as the Proton acceptor in the catalytic mechanism. Mg(2+) is bound by residues Asn342 and Asp351. An ATP-binding site is contributed by Asp351. Positions 628-652 (YHSEEEATGPEAVARSTEEQSSYSN) are disordered. Thr635 is subject to Phosphothreonine. A Phosphoserine modification is found at Ser651. Position 665 (Sec665) is a non-standard amino acid, selenocysteine.

It belongs to the SELO family. Requires Mg(2+) as cofactor.

Its subcellular location is the mitochondrion. It catalyses the reaction L-tyrosyl-[protein] + ATP = O-(5'-adenylyl)-L-tyrosyl-[protein] + diphosphate. The enzyme catalyses L-threonyl-[protein] + ATP = 3-O-(5'-adenylyl)-L-threonyl-[protein] + diphosphate. It carries out the reaction L-seryl-[protein] + ATP = 3-O-(5'-adenylyl)-L-seryl-[protein] + diphosphate. Catalyzes the transfer of adenosine 5'-monophosphate (AMP) to Ser, Thr and Tyr residues of target proteins (AMPylation). May be a redox-active mitochondrial selenoprotein which interacts with a redox target protein. In Mus musculus (Mouse), this protein is Protein adenylyltransferase SelO, mitochondrial.